Consider the following 614-residue polypeptide: Nuclear receptor subfamily 1 group D member 1 (614 aa).

Polar residues predominate over residues 1–12 (MTTLDSNNNTGG). A required for phosphorylation by CSNK1E and cytoplasmic localization region spans residues 1 to 70 (MTTLDSNNNT…TQDPARSFGS (70 aa)). Positions 1–119 (MTTLDSNNNT…SSRVSPSKST (119 aa)) are disordered. Residues 1–128 (MTTLDSNNNT…TSNITKLNGM (128 aa)) are modulating. Residues 14 to 34 (ITYIGSSGSSPSRTSPESLYS) show a composition bias toward low complexity. Residues 35-48 (DNSNGSFQSLTQGC) show a composition bias toward polar residues. The segment at 49 to 284 (PTYFPPSPTG…PPRSPSPEPT (236 aa)) is crucial for activation of GJA1. A phosphoserine; by GSK3-beta mark is found at S55 and S59. The segment covering 69–102 (GSIPPSLSDDGSPSSSSSSSSSSSSFYNGSPPGS) has biased composition (low complexity). Positions 129-205 (VLLCKVCGDV…VGMSRDAVRF (77 aa)) form a DNA-binding region, nuclear receptor. 2 NR C4-type zinc fingers span residues 132–152 (CKVC…CEGC) and 169–193 (CLKN…FKKC). K191 and K192 each carry N6-acetyllysine; by KAT5. The segment covering 233–243 (SQCPLETSPTQ) has biased composition (polar residues). 2 disordered regions span residues 233 to 285 (SQCP…EPTV) and 311 to 345 (PGNF…DNNT). A compositionally biased stretch (pro residues) spans 244–261 (HPTPGPMGPSPPPAPVPS). T274 is modified (phosphothreonine; by CDK1). The NR LBD domain occupies 284 to 614 (TVEDVISQVA…KLLSFRVDAQ (331 aa)). Polar residues predominate over residues 311–324 (PGNFNANHASGSPP). Position 400 is an N6-acetyllysine (K400). C418 contributes to the heme binding site. Position 591 is an N6-acetyllysine (K591). Heme is bound at residue H602.

It belongs to the nuclear hormone receptor family. NR1 subfamily. As to quaternary structure, binds DNA as a monomer or a homodimer. Interacts with C1D, NR2E3 and SP1. Interacts with OPHN1 (via C-terminus). Interacts with ZNHIT1. Interacts with PER2; the interaction associates PER2 to BMAL1 promoter region. Interacts with CRY1. Interacts with CCAR2. Interacts with SIAH2. Interacts with CDK1. Interacts with FBXW7. Interacts with HUWE1. Interacts with NR0B2. Interacts with NFIL3. Interacts (via domain NR LBD) with HSP90AA1 and HSP90AB1. In terms of processing, ubiquitinated, leading to its proteasomal degradation. Ubiquitinated by SIAH2; leading to its proteasomal degradation. Ubiquitinated by the SCF(FBXW7) complex when phosphorylated by CDK1 leading to its proteasomal degradation. Rapidly ubiquitinated in response to inflammatory triggers and sumoylation is a prerequisite to its ubiquitination. Sumoylated by UBE2I, desumoylated by SENP1, and sumoylation is a prerequisite to its ubiquitination. Post-translationally, phosphorylated by CSNK1E; phosphorylation enhances its cytoplasmic localization. In terms of processing, undergoes lysosome-mediated degradation in a time-dependent manner in the liver. As to expression, widely expressed. Expressed at high levels in the liver, adipose tissue, skeletal muscle and brain. Also expressed in endothelial cells (ECs), vascular smooth muscle cells (VSMCs) and macrophages. Expression oscillates diurnally in the suprachiasmatic nucleus (SCN) of the hypothalamus as well as in peripheral tissues. Expression increases during the differentiation of pre-adipocytes into mature adipocytes. Expressed at high levels in some squamous carcinoma cell lines.

The protein localises to the nucleus. Its subcellular location is the cytoplasm. The protein resides in the cell projection. It is found in the dendrite. It localises to the dendritic spine. Transcriptional repressor which coordinates circadian rhythm and metabolic pathways in a heme-dependent manner. Integral component of the complex transcription machinery that governs circadian rhythmicity and forms a critical negative limb of the circadian clock by directly repressing the expression of core clock components BMAL1, CLOCK and CRY1. Also regulates genes involved in metabolic functions, including lipid and bile acid metabolism, adipogenesis, gluconeogenesis and the macrophage inflammatory response. Acts as a receptor for heme which stimulates its interaction with the NCOR1/HDAC3 corepressor complex, enhancing transcriptional repression. Recognizes two classes of DNA response elements within the promoter of its target genes and can bind to DNA as either monomers or homodimers, depending on the nature of the response element. Binds as a monomer to a response element composed of the consensus half-site motif 5'-[A/G]GGTCA-3' preceded by an A/T-rich 5' sequence (RevRE), or as a homodimer to a direct repeat of the core motif spaced by two nucleotides (RevDR-2). Acts as a potent competitive repressor of ROR alpha (RORA) function and regulates the levels of its ligand heme by repressing the expression of PPARGC1A, a potent inducer of heme synthesis. Regulates lipid metabolism by repressing the expression of APOC3 and by influencing the activity of sterol response element binding proteins (SREBPs); represses INSIG2 which interferes with the proteolytic activation of SREBPs which in turn govern the rhythmic expression of enzymes with key functions in sterol and fatty acid synthesis. Regulates gluconeogenesis via repression of G6PC1 and PEPCK and adipocyte differentiation via repression of PPARG. Regulates glucagon release in pancreatic alpha-cells via the AMPK-NAMPT-SIRT1 pathway and the proliferation, glucose-induced insulin secretion and expression of key lipogenic genes in pancreatic-beta cells. Positively regulates bile acid synthesis by increasing hepatic expression of CYP7A1 via repression of NR0B2 and NFIL3 which are negative regulators of CYP7A1. Modulates skeletal muscle oxidative capacity by regulating mitochondrial biogenesis and autophagy; controls mitochondrial biogenesis and respiration by interfering with the STK11-PRKAA1/2-SIRT1-PPARGC1A signaling pathway. Represses the expression of SERPINE1/PAI1, an important modulator of cardiovascular disease and the expression of inflammatory cytokines and chemokines in macrophages. Represses gene expression at a distance in macrophages by inhibiting the transcription of enhancer-derived RNAs (eRNAs). Plays a role in the circadian regulation of body temperature and negatively regulates thermogenic transcriptional programs in brown adipose tissue (BAT); imposes a circadian oscillation in BAT activity, increasing body temperature when awake and depressing thermogenesis during sleep. In concert with NR2E3, regulates transcriptional networks critical for photoreceptor development and function. In addition to its activity as a repressor, can also act as a transcriptional activator. In the ovarian granulosa cells acts as a transcriptional activator of STAR which plays a role in steroid biosynthesis. In collaboration with SP1, activates GJA1 transcription in a heme-independent manner. Represses the transcription of CYP2B10, CYP4A10 and CYP4A14. Represses the transcription of CES2. Represses and regulates the circadian expression of TSHB in a NCOR1-dependent manner. Negatively regulates the protein stability of NR3C1 and influences the time-dependent subcellular distribution of NR3C1, thereby affecting its transcriptional regulatory activity. Plays a critical role in the circadian control of neutrophilic inflammation in the lung; under resting, non-stress conditions, acts as a rhythmic repressor to limit inflammatory activity whereas in the presence of inflammatory triggers undergoes ubiquitin-mediated degradation thereby relieving inhibition of the inflammatory response. Plays a key role in the circadian regulation of microglial activation and neuroinflammation; suppresses microglial activation through the NF-kappaB pathway in the central nervous system. Plays a role in the regulation of the diurnal rhythms of lipid and protein metabolism in the skeletal muscle via transcriptional repression of genes controlling lipid and amino acid metabolism in the muscle. The polypeptide is Nuclear receptor subfamily 1 group D member 1 (NR1D1) (Homo sapiens (Human)).